The primary structure comprises 199 residues: Recombination protein RecR (199 aa).

The segment at 57–72 (CRSCRTFTEESHCPIC) adopts a C4-type zinc-finger fold. Residues 81–176 (EQICVVETPA…SVSRIAHGVP (96 aa)) form the Toprim domain.

It belongs to the RecR family.

Its function is as follows. May play a role in DNA repair. It seems to be involved in an RecBC-independent recombinational process of DNA repair. It may act with RecF and RecO. This is Recombination protein RecR from Shewanella sediminis (strain HAW-EB3).